A 539-amino-acid chain; its full sequence is MDTEYQSFVETLRAGQKPEFPAHAKTIEYARELDAHDKLSQLRSDFNIPTKGSLRKKALDGGVAGETKEPRVPNGVSSATKPNGTVNSDLKDDEASIYFVGNSLGAQPKCIRQYIDAHLETWASIGVNGHFTSFDNSPLASWQDMAAACAAQSVDLVGAKSANEIIYMNTLTVNLHLMMASFYRPTAKRHKIIAEWKPFPSDSYALASQLHWHGLAPATSLIEIHPPNPTGSSPPTLTLTTSHILATIDAHADSTALLLLPGIQYYTGQLFDMARITRHARARGIVVGWDLAHAVGNVELELHAWGVDFAVWCTYKYLNAGPGALGGVFVHGRHHSFHRGGGGSGGVGGGRGEGGDGDGGDGGDGDGMALGYRHRLAGWYGADKAVRFEMEKVFWPAEGAAGWQVSNPSVVDLACVRATLGMFERVGMRALRDKAVLLTGYLEWLLLGLLADGVGKGGDGEAAFRIITPGHPADRGSQLSLLLRGGLLEGVSKELADGGVVVDVRKPDVIRVAPVPMYCRFEDVWGFITVFNRALDRCA.

Residues 60-87 (DGGVAGETKEPRVPNGVSSATKPNGTVN) are disordered. The span at 75–87 (GVSSATKPNGTVN) shows a compositional bias: polar residues. Residues L171, T172, 199–202 (FPSD), D290, H293, and Y315 each bind pyridoxal 5'-phosphate. K316 is modified (N6-(pyridoxal phosphate)lysine). Residues 340–352 (GGGGSGGVGGGRG) show a composition bias toward gly residues. Residues 340 to 363 (GGGGSGGVGGGRGEGGDGDGGDGG) are disordered. Positions 379 and 407 each coordinate pyridoxal 5'-phosphate.

This sequence belongs to the kynureninase family. Homodimer. Pyridoxal 5'-phosphate serves as cofactor.

It localises to the cytoplasm. It carries out the reaction L-kynurenine + H2O = anthranilate + L-alanine + H(+). The catalysed reaction is 3-hydroxy-L-kynurenine + H2O = 3-hydroxyanthranilate + L-alanine + H(+). It functions in the pathway amino-acid degradation; L-kynurenine degradation; L-alanine and anthranilate from L-kynurenine: step 1/1. The protein operates within cofactor biosynthesis; NAD(+) biosynthesis; quinolinate from L-kynurenine: step 2/3. Catalyzes the cleavage of L-kynurenine (L-Kyn) and L-3-hydroxykynurenine (L-3OHKyn) into anthranilic acid (AA) and 3-hydroxyanthranilic acid (3-OHAA), respectively. The sequence is that of Kynureninase 2 from Chaetomium globosum (strain ATCC 6205 / CBS 148.51 / DSM 1962 / NBRC 6347 / NRRL 1970) (Soil fungus).